A 234-amino-acid polypeptide reads, in one-letter code: 7-cyano-7-deazaguanine synthase (234 aa).

An ATP-binding site is contributed by 7–17 (LSGGLDSAVCM). 4 residues coordinate Zn(2+): Cys197, Cys208, Cys211, and Cys214.

It belongs to the QueC family. It depends on Zn(2+) as a cofactor.

It carries out the reaction 7-carboxy-7-deazaguanine + NH4(+) + ATP = 7-cyano-7-deazaguanine + ADP + phosphate + H2O + H(+). The protein operates within purine metabolism; 7-cyano-7-deazaguanine biosynthesis. Its function is as follows. Catalyzes the ATP-dependent conversion of 7-carboxy-7-deazaguanine (CDG) to 7-cyano-7-deazaguanine (preQ(0)). The polypeptide is 7-cyano-7-deazaguanine synthase (Methanococcus aeolicus (strain ATCC BAA-1280 / DSM 17508 / OCM 812 / Nankai-3)).